Consider the following 183-residue polypeptide: MAFNENRVINNYAEALMEVSGKQTAKVLSELQVIELVFERNKELAQTLDDVSVSSQQQEAFIGILGKGCSTTTKNFLETLADNRHFSLLEEIVENLDQRVSASNNHSLVIAKTAIPITAEQSKRLSKIAQKKFGYQHVEVKNVVDPNVIAGVILTAGSKTIDGSIKNKLVQLNNHIKQAVGKE.

This sequence belongs to the ATPase delta chain family. F-type ATPases have 2 components, F(1) - the catalytic core - and F(0) - the membrane proton channel. F(1) has five subunits: alpha(3), beta(3), gamma(1), delta(1), epsilon(1). F(0) has three main subunits: a(1), b(2) and c(10-14). The alpha and beta chains form an alternating ring which encloses part of the gamma chain. F(1) is attached to F(0) by a central stalk formed by the gamma and epsilon chains, while a peripheral stalk is formed by the delta and b chains.

The protein resides in the cell membrane. Its function is as follows. F(1)F(0) ATP synthase produces ATP from ADP in the presence of a proton or sodium gradient. F-type ATPases consist of two structural domains, F(1) containing the extramembraneous catalytic core and F(0) containing the membrane proton channel, linked together by a central stalk and a peripheral stalk. During catalysis, ATP synthesis in the catalytic domain of F(1) is coupled via a rotary mechanism of the central stalk subunits to proton translocation. This protein is part of the stalk that links CF(0) to CF(1). It either transmits conformational changes from CF(0) to CF(1) or is implicated in proton conduction. In Oenococcus oeni (strain ATCC BAA-331 / PSU-1), this protein is ATP synthase subunit delta.